A 644-amino-acid polypeptide reads, in one-letter code: Probable lysophospholipase 2 (644 aa).

A signal peptide spans 1-19 (MYFQSFYFLALLLATAVYG). N-linked (GlcNAc...) asparagine glycans are attached at residues asparagine 44, asparagine 96, asparagine 141, asparagine 178, asparagine 221, asparagine 245, asparagine 253, asparagine 281, asparagine 286, asparagine 316, asparagine 319, asparagine 373, asparagine 393, asparagine 449, asparagine 501, asparagine 558, asparagine 579, and asparagine 596. The PLA2c domain maps to 53–600 (SCDSSEIMVN…SQYCWNGTVD (548 aa)).

The protein belongs to the lysophospholipase family.

It localises to the secreted. The enzyme catalyses a 1-acyl-sn-glycero-3-phosphocholine + H2O = sn-glycerol 3-phosphocholine + a fatty acid + H(+). Its function is as follows. Catalyzes the release of fatty acids from lysophospholipids. This chain is Probable lysophospholipase 2 (plb2), found in Schizosaccharomyces pombe (strain 972 / ATCC 24843) (Fission yeast).